The primary structure comprises 454 residues: tRNA modification GTPase MnmE (454 aa).

(6S)-5-formyl-5,6,7,8-tetrahydrofolate is bound by residues arginine 23, glutamate 80, and lysine 120. In terms of domain architecture, TrmE-type G spans 216–377 (GMKVVIAGRP…LRNHLKQSMG (162 aa)). Residue asparagine 226 participates in K(+) binding. GTP contacts are provided by residues 226–231 (NAGKSS), 245–251 (TDIAGTT), 270–273 (DTAG), 335–338 (NKAD), and 358–360 (SAR). Residue serine 230 coordinates Mg(2+). Threonine 245, isoleucine 247, and threonine 250 together coordinate K(+). Threonine 251 is a Mg(2+) binding site. (6S)-5-formyl-5,6,7,8-tetrahydrofolate is bound at residue lysine 454.

This sequence belongs to the TRAFAC class TrmE-Era-EngA-EngB-Septin-like GTPase superfamily. TrmE GTPase family. Homodimer. Heterotetramer of two MnmE and two MnmG subunits. K(+) serves as cofactor.

It localises to the cytoplasm. In terms of biological role, exhibits a very high intrinsic GTPase hydrolysis rate. Involved in the addition of a carboxymethylaminomethyl (cmnm) group at the wobble position (U34) of certain tRNAs, forming tRNA-cmnm(5)s(2)U34. In Salmonella typhi, this protein is tRNA modification GTPase MnmE.